A 154-amino-acid polypeptide reads, in one-letter code: Myoglobin (154 aa).

The Globin domain occupies 2 to 148; sequence GLSDGEWQLV…FRNDMAAKYK (147 aa). Ser4 is subject to Phosphoserine. His65 provides a ligand contact to nitrite. His65 contacts O2. The residue at position 68 (Thr68) is a Phosphothreonine. His94 contributes to the heme b binding site.

It belongs to the globin family. Monomeric.

Its subcellular location is the cytoplasm. The protein resides in the sarcoplasm. The enzyme catalyses Fe(III)-heme b-[protein] + nitric oxide + H2O = Fe(II)-heme b-[protein] + nitrite + 2 H(+). The catalysed reaction is H2O2 + AH2 = A + 2 H2O. Its function is as follows. Monomeric heme protein which primary function is to store oxygen and facilitate its diffusion within muscle tissues. Reversibly binds oxygen through a pentacoordinated heme iron and enables its timely and efficient release as needed during periods of heightened demand. Depending on the oxidative conditions of tissues and cells, and in addition to its ability to bind oxygen, it also has a nitrite reductase activity whereby it regulates the production of bioactive nitric oxide. Under stress conditions, like hypoxia and anoxia, it also protects cells against reactive oxygen species thanks to its pseudoperoxidase activity. This chain is Myoglobin (MB), found in Aotus trivirgatus (Three-striped night monkey).